The primary structure comprises 332 residues: Decaprenyl-phosphate phosphoribosyltransferase (332 aa).

Residues 1 to 12 (MSEHAAEHHRDT) are compositionally biased toward basic and acidic residues. Residues 1-36 (MSEHAAEHHRDTQNFLTSEPHTTAIEDNKKRQPPKN) form a disordered region. Transmembrane regions (helical) follow at residues 50 to 70 (WVKNVLVLAAPLAAGADAIFN) and 74 to 94 (IIDVAIAFVVFCFGASAIYLV). Residues Lys-52 and Tyr-92 each coordinate 5-phospho-alpha-D-ribose 1-diphosphate. Mg(2+) is bound by residues Asn-95 and Asp-99. Lys-109 is a 5-phospho-alpha-D-ribose 1-diphosphate binding site. The next 2 membrane-spanning stretches (helical) occupy residues 114-134 (IAAGVLPVGMAYGMAVALIAL) and 146-166 (VALACVIGVYIALQLGYCFGW). Residues Lys-167 and Arg-184 each contribute to the 5-phospho-alpha-D-ribose 1-diphosphate site. 2 helical membrane passes run 169-189 (MPVIDIALVSSGFMLRAMAGG) and 190-210 (VAAGIELSQWFLLVAAFGSLF). Trans,octa-cis-decaprenyl phosphate is bound at residue Lys-215. A run of 3 helical transmembrane segments spans residues 244–264 (FVWTMAATAVVMSYALWGFDL), 273–293 (PWYQISMVPFTIAILRYAAGV), and 310–330 (VLQVLALAWVFCIVMAVYIMP).

The protein belongs to the UbiA prenyltransferase family. DPPR synthase subfamily. The cofactor is Mg(2+).

It is found in the cell inner membrane. The catalysed reaction is trans,octa-cis-decaprenyl phosphate + 5-phospho-alpha-D-ribose 1-diphosphate + H(+) = trans,octa-cis-decaprenylphospho-beta-D-ribofuranose 5-phosphate + diphosphate. The protein operates within cell wall biogenesis; cell wall polysaccharide biosynthesis. Its function is as follows. Involved in the biosynthesis of decaprenylphosphoryl arabinose (DPA) a precursor for arabinan synthesis in mycobacterial cell wall biosynthesis. Catalyzes the transfer of a 5-phosphoribosyl residue from phosphoribose diphosphate (PRPP) to decaprenyl phosphate (DP) to form decaprenylphosphoryl-5-phosphoribose (DPPR). The protein is Decaprenyl-phosphate phosphoribosyltransferase of Corynebacterium glutamicum (strain ATCC 13032 / DSM 20300 / JCM 1318 / BCRC 11384 / CCUG 27702 / LMG 3730 / NBRC 12168 / NCIMB 10025 / NRRL B-2784 / 534).